The following is a 288-amino-acid chain: N-acetylneuraminate lyase (288 aa).

Positions 44 and 45 each coordinate aceneuramate. Tyr-133 acts as the Proton donor in catalysis. Lys-161 acts as the Schiff-base intermediate with substrate in catalysis. Aceneuramate is bound by residues Thr-163, Gly-185, Asp-187, Glu-188, and Ser-204.

This sequence belongs to the DapA family. NanA subfamily. Homotetramer.

The protein resides in the cytoplasm. It carries out the reaction aceneuramate = aldehydo-N-acetyl-D-mannosamine + pyruvate. The protein operates within amino-sugar metabolism; N-acetylneuraminate degradation; D-fructose 6-phosphate from N-acetylneuraminate: step 1/5. Its function is as follows. Catalyzes the reversible aldol cleavage of N-acetylneuraminic acid (sialic acid; Neu5Ac) to form pyruvate and N-acetylmannosamine (ManNAc) via a Schiff base intermediate. In Clostridium perfringens (strain SM101 / Type A), this protein is N-acetylneuraminate lyase.